The sequence spans 364 residues: GDSL esterase/lipase EXL3 (364 aa).

A signal peptide spans 1-32; it reads MKDNSSWSCSCSWSSWKICLLSVLFLTETITA. Residue Ser-50 is the Nucleophile of the active site. Catalysis depends on residues Asp-339 and His-342.

The protein belongs to the 'GDSL' lipolytic enzyme family. In terms of tissue distribution, flower buds.

It is found in the secreted. This Arabidopsis thaliana (Mouse-ear cress) protein is GDSL esterase/lipase EXL3 (EXL3).